A 376-amino-acid polypeptide reads, in one-letter code: Protein-tyrosine sulfotransferase 2 (376 aa).

Residues Met1–Val8 lie on the Cytoplasmic side of the membrane. A helical; Signal-anchor for type II membrane protein transmembrane segment spans residues Leu9–Gly25. Residues Gln26–Ser376 are Lumenal-facing. 3'-phosphoadenylyl sulfate is bound at residue Arg77–Thr81. Residues Cys95 and Cys155 are joined by a disulfide bond. Glu98 serves as the catalytic Proton donor/acceptor. Residues Arg100–Arg104 are interaction with peptide substrate. Residues Arg182, Ser190, and Arg194 each coordinate 3'-phosphoadenylyl sulfate. The cysteines at positions 224 and 232 are disulfide-linked. 3'-phosphoadenylyl sulfate contacts are provided by residues Tyr237, Ser284–Asn293, and Lys299. Residues Asn342 and Asn367 are each glycosylated (N-linked (GlcNAc...) asparagine).

Belongs to the protein sulfotransferase family. Homodimer. Can also form heterodimers with TPST1. N-glycosylated. As to expression, widely expressed.

Its subcellular location is the golgi apparatus membrane. It carries out the reaction L-tyrosyl-[protein] + 3'-phosphoadenylyl sulfate = O-sulfo-L-tyrosine-[protein] + adenosine 3',5'-bisphosphate + H(+). Catalyzes the O-sulfation of tyrosine residues within acidic motifs of polypeptides, using 3'-phosphoadenylyl sulfate (PAPS) as cosubstrate. The sequence is that of Protein-tyrosine sulfotransferase 2 (Tpst2) from Mus musculus (Mouse).